Consider the following 290-residue polypeptide: ATP synthase gamma chain (290 aa).

The protein belongs to the ATPase gamma chain family. In terms of assembly, F-type ATPases have 2 components, CF(1) - the catalytic core - and CF(0) - the membrane proton channel. CF(1) has five subunits: alpha(3), beta(3), gamma(1), delta(1), epsilon(1). CF(0) has four main subunits: a, b, b' and c.

The protein localises to the cellular chromatophore membrane. Its function is as follows. Produces ATP from ADP in the presence of a proton gradient across the membrane. The gamma chain is believed to be important in regulating ATPase activity and the flow of protons through the CF(0) complex. This Rhodobacter capsulatus (Rhodopseudomonas capsulata) protein is ATP synthase gamma chain.